Reading from the N-terminus, the 2009-residue chain is ADP-ribosylation factor guanine nucleotide-exchange factor SEC7 (2009 aa).

A disordered region spans residues 1-220 (MSEQNSVVNA…ISLSSNGSNT (220 aa)). Over residues 17–33 (ISSNVETASSVNPSVKP) the composition is skewed to polar residues. Positions 37–53 (IKEEAKETNGEDQKCKG) are enriched in basic and acidic residues. The span at 91–118 (EGEDGDEDEDEDEDEDEDNGDEDDEDVD) shows a compositional bias: acidic residues. Residues 134–143 (SVSGESTESS) show a composition bias toward low complexity. Over residues 144–154 (SGEDEESDESD) the composition is skewed to acidic residues. The segment covering 155-165 (GNTSNSSSGDE) has biased composition (low complexity). Over residues 166–184 (SGSEEEEEEEEEEEEEENA) the composition is skewed to acidic residues. A compositionally biased stretch (polar residues) spans 194-209 (SVPTNDSTAPRSTHTR). The span at 210 to 220 (NISLSSNGSNT) shows a compositional bias: low complexity. Serine 212 and serine 215 each carry phosphoserine. Position 334 is a phosphothreonine (threonine 334). A phosphoserine mark is found at serine 447, serine 452, and serine 455. Residues 653 to 657 (NYDCN) carry the HUS box motif. A compositionally biased stretch (low complexity) spans 771–788 (SSARQESRSSLSNDVRSS). The segment at 771 to 814 (SSARQESRSSLSNDVRSSIMTSNDDFKPTYEDEESRSLSSQNID) is disordered. A Glycyl lysine isopeptide (Lys-Gly) (interchain with G-Cter in ubiquitin) cross-link involves residue lysine 797. Residue serine 807 is modified to Phosphoserine. One can recognise an SEC7 domain in the interval 824–1010 (LKLRKTALSE…LFNEIANNEI (187 aa)). Aspartate 940 provides a ligand contact to Mg(2+). Residues 1017–1220 (HQAMLSGDTN…QARVANPRVS (204 aa)) form an HDS1 domain region. Serine 1226 is modified (phosphoserine). Threonine 1240 is modified (phosphothreonine). Over residues 1708-1723 (GRKSSVSHHQTTNDTS) the composition is skewed to polar residues. The tract at residues 1708–1803 (GRKSSVSHHQ…KKTKHMKRNE (96 aa)) is disordered. A compositionally biased stretch (basic and acidic residues) spans 1724 to 1751 (QHSDDDSNDRRENDSNISETVERAHQEE). A phosphoserine mark is found at serine 1741 and serine 1752. Positions 1764-1777 (LNGQTKLNNGNSVP) are enriched in polar residues. Positions 1836–1883 (FENEDFAHCIPYKEAIRITRLLEKSYEFSRDFNEDYGLRTRLVEARVV) are C2 domain-interacting region (CIR).

In terms of assembly, interacts with ARF1. Interacts (via C-terminus) with RSP5 ubiquitin ligase.

It localises to the cytoplasm. It is found in the golgi apparatus. The protein resides in the trans-Golgi network. The protein localises to the cytoplasmic vesicle. Its subcellular location is the COPI-coated vesicle membrane. It localises to the COPII-coated vesicle membrane. Functionally, guanine exchange factor that acts as an activator of ARF1 at the trans-Golgi network and is thus involved in vesicular budding and traffic between compartments of the Golgi apparatus. Activation of Arf (ADP-ribosylation factor) GTPases is essential for vesicle formation via recruitment of cargo adapters and coat proteins necessary for Golgi trafficking. Also plays an essential role in ER-to-Golgi traffic. SEC7 also acts as an effector of two Rab GTPases, YPT1 and YPT31/32. The polypeptide is ADP-ribosylation factor guanine nucleotide-exchange factor SEC7 (Saccharomyces cerevisiae (strain ATCC 204508 / S288c) (Baker's yeast)).